An 816-amino-acid polypeptide reads, in one-letter code: MGDTVVEPAPLKPTSEPTSGPPGNNGGSLLSVITEGVGELSVIDPEVAQKACQEVLEKVKLLHGGVAVSSRGTPLELVNGDGVDSEIRCLDDPPAQIREEEDEMGAAVASGTAKGARRRRQNNSAKQSWLLRLFESKLFDISMAISYLYNSKEPGVQAYIGNRLFCFRNEDVDFYLPQLLNMYIHMDEDVGDAIKPYIVHRCRQSINFSLQCALLLGAYSSDMHISTQRHSRGTKLRKLILSDELKPAHRKRELPSLSPAPDTGLSPSKRTHQRSKSDATASISLSSNLKRTASNPKVENEDEELSSSTESIDNSFSSPVRLAPEREFIKSLMAIGKRLATLPTKEQKTQRLISELSLLNHKLPARVWLPTAGFDHHVVRVPHTQAVVLNSKDKAPYLIYVEVLECENFDTTSVPARIPENRIRSTRSVENLPECGITHEQRAGSFSTVPNYDNDDEAWSVDDIGELQVELPEVHTNSCDNISQFSVDSITSQESKEPVFIAAGDIRRRLSEQLAHTPTAFKRDPEDPSAVALKEPWQEKVRRIREGSPYGHLPNWRLLSVIVKCGDDLRQELLAFQVLKQLQSIWEQERVPLWIKPYKILVISADSGMIEPVVNAVSIHQVKKQSQLSLLDYFLQEHGSYTTEAFLSAQRNFVQSCAGYCLVCYLLQVKDRHNGNILLDAEGHIIHIDFGFILSSSPRNLGFETSAFKLTTEFVDVMGGLDGDMFNYYKMLMLQGLIAARKHMDKVVQIVEIMQQGSQLPCFHGSSTIRNLKERFHMSMTEEQLQLLVEQMVDGSMRSITTKLYDGFQYLTNGIM.

The disordered stretch occupies residues 1–30 (MGDTVVEPAPLKPTSEPTSGPPGNNGGSLL). At G2 the chain carries N-acetylglycine. Residues 29–242 (LLSVITEGVG…GTKLRKLILS (214 aa)) enclose the PIK helical domain. Positions 41-67 (SVIDPEVAQKACQEVLEKVKLLHGGVA) are interaction with ACBD3. 2 disordered regions span residues 101–120 (EDEM…RRRR) and 248–318 (AHRK…SFSS). S258 is subject to Phosphoserine. A Phosphothreonine modification is found at T263. Phosphoserine is present on residues S266, S275, S277, S284, and S294. 2 stretches are compositionally biased toward polar residues: residues 278–297 (DATA…SNPK) and 306–318 (SSST…SFSS). Position 428 is a phosphoserine (S428). T438 is modified (phosphothreonine). S511 is modified (phosphoserine). T517 and T519 each carry phosphothreonine. Residues 535–801 (EPWQEKVRRI…MVDGSMRSIT (267 aa)) enclose the PI3K/PI4K catalytic domain. Positions 541–547 (VRRIREG) are G-loop. Residues 668–676 (QVKDRHNGN) are catalytic loop. An activation loop region spans residues 687-711 (HIDFGFILSSSPRNLGFETSAFKLT).

Belongs to the PI3/PI4-kinase family. Type III PI4K subfamily. As to quaternary structure, interacts with ARF1 and ARF3 in the Golgi complex, but not with ARF4, ARF5 or ARF6. Interacts with NCS1/FREQ in a calcium-independent manner. Interacts with CALN1/CABP8 and CALN2/CABP7; in a calcium-dependent manner; this interaction competes with NCS1/FREQ binding. Interacts with ACBD3. Interacts with ARMH3, YWHAB, YWHAE, YWHAG, YWHAH, YWHAQ, YWHAZ and SFN. Interacts with GGA2 (via VHS domain); the interaction is important for PI4KB location at the Golgi apparatus membrane. Interacts with ATG9A. In terms of assembly, (Microbial infection) Interacts with Aichi virus protein 3A. Part of a complex Aichi virus protein 3A/ACBD3/PI4KB that allows the synthesis of PI4P at the viral RNA replication sites. Requires Mg(2+) as cofactor. It depends on Mn(2+) as a cofactor. Widely expressed with highest levels in heart, skeletal muscle, pancreas, testis and ovary. Weakly expressed in liver. Expressed in the innear ear in the epithelium of the spinal organ of corti.

It is found in the endomembrane system. The protein resides in the mitochondrion outer membrane. Its subcellular location is the rough endoplasmic reticulum membrane. The protein localises to the golgi apparatus. It localises to the golgi apparatus membrane. It is found in the cytoplasm. The protein resides in the perinuclear region. The catalysed reaction is a 1,2-diacyl-sn-glycero-3-phospho-(1D-myo-inositol) + ATP = a 1,2-diacyl-sn-glycero-3-phospho-(1D-myo-inositol 4-phosphate) + ADP + H(+). Inhibited by wortmannin and adenosine. Increased kinase activity upon interaction with NCS1/FREQ. Its activity is regulated as follows. (Microbial infection) Activated by Aichi virus protein 3A, this activation is sensitized by ACBD3. Functionally, phosphorylates phosphatidylinositol (PI) in the first committed step in the production of the second messenger inositol-1,4,5,-trisphosphate (PIP). May regulate Golgi disintegration/reorganization during mitosis, possibly via its phosphorylation. Involved in Golgi-to-plasma membrane trafficking. May play an important role in the inner ear development. (Microbial infection) Plays an essential role in Aichi virus RNA replication. Recruited by ACBD3 at the viral replication sites. Its function is as follows. (Microbial infection) Required for cellular spike-mediated entry of human coronavirus SARS-CoV. This is Phosphatidylinositol 4-kinase beta from Homo sapiens (Human).